Here is a 1579-residue protein sequence, read N- to C-terminus: Eukaryotic translation initiation factor 4 gamma 3 (1579 aa).

Disordered regions lie at residues Met-1 to Val-35 and Thr-128 to Leu-326. Over residues Pro-10 to Pro-25 the composition is skewed to low complexity. A compositionally biased stretch (polar residues) spans Asn-26–Val-35. Positions Pro-134–Gly-162 are PABPC1-binding. The span at Pro-167 to Gln-183 shows a compositional bias: pro residues. A Phosphothreonine modification is found at Thr-168. A phosphoserine mark is found at Ser-230, Ser-232, and Ser-267. Residues Ser-266–Leu-292 are compositionally biased toward low complexity. Residues Ala-295 to Asp-308 are compositionally biased toward basic and acidic residues. The segment covering Pro-315 to Leu-326 has biased composition (polar residues). 4 positions are modified to phosphoserine: Ser-436, Ser-470, Ser-472, and Ser-490. A compositionally biased stretch (basic and acidic residues) spans Arg-454–Ser-470. Disordered regions lie at residues Arg-454–Gly-615, Arg-681–Glu-706, and Ala-724–Ile-744. Acidic residues predominate over residues Glu-471 to Ala-480. Residues Asp-481–Pro-501 are compositionally biased toward polar residues. Composition is skewed to basic and acidic residues over residues Lys-506 to Asp-515 and Ser-549 to Glu-563. Positions Ser-589–Gly-598 are enriched in low complexity. Residues Glu-606–Gly-615 are compositionally biased toward basic and acidic residues. Residues Glu-614–Leu-625 form an EIF4E-binding region. An eIF3/EIF4A-binding region spans residues Val-694–Thr-1014. HEAT repeat units follow at residues Asp-740–Asp-778, Thr-779–Val-826, Asn-827–Leu-900, Thr-901–Lys-939, and Ala-940–Trp-979. An MIF4G domain is found at Phe-750 to Asn-978. Over residues Lys-855–Asp-871 the composition is skewed to basic and acidic residues. Positions Lys-855–Glu-875 are disordered. Residues Lys-989–Arg-1018 adopt a coiled-coil conformation. Disordered regions lie at residues Val-1009–Lys-1037 and Leu-1067–Glu-1214. Positions Leu-1086–Pro-1098 are enriched in low complexity. Ser-1150 bears the Phosphoserine; by CaMK1 mark. 2 stretches are compositionally biased toward basic and acidic residues: residues Ser-1150 to Glu-1169 and Asp-1179 to Lys-1197. A coiled-coil region spans residues Leu-1154–Gly-1176. Phosphoserine is present on Ser-1212. The MI domain occupies Glu-1215–Ser-1337. Residues Ser-1406–Ile-1438 adopt a coiled-coil conformation. Positions Leu-1410 to Asn-1579 constitute a W2 domain. Positions Leu-1427–Asn-1579 are EIF4A-binding. The tract at residues Phe-1565 to Asn-1579 is necessary but not sufficient for MKNK1-binding.

This sequence belongs to the eukaryotic initiation factor 4G family. Interacts with EIF4A, EIF4E, eIF3 and PABPC1. Part of a complex with EIF4E. eIF4F is a multi-subunit complex, the composition of which varies with external and internal environmental conditions. It is composed of at least EIF4A, EIF4E and EIF4G1/EIF4G3. EIF4G1/EIF4G3 interacts through its C-terminus with the serine/threonine kinases MKNK1, and with MKNK2. Appears to act as a scaffold protein, holding these enzymes in place to phosphorylate eIF4E. Non-phosphorylated EIF4EBP1 competes with EIF4G1/EIFG3 to interact with EIF4E; insulin stimulated MAP-kinase (MAPK1 and MAPK3) phosphorylation of EIF4EBP1 causes dissociation of the complex allowing EIF4G1/EIF4G3 to bind and consequent initiation of translation. EIF4G1/EIF4G3 interacts with PABPC1 to bring about circularization of the mRNA. Interacts with FXR1; promoting translation of FXR1 target mRNAs.

Functionally, component of the protein complex eIF4F, which is involved in the recognition of the mRNA cap, ATP-dependent unwinding of 5'-terminal secondary structure and recruitment of mRNA to the ribosome. Functional homolog of EIF4G1. The polypeptide is Eukaryotic translation initiation factor 4 gamma 3 (Eif4g3) (Mus musculus (Mouse)).